The chain runs to 55 residues: uncharacterized protein (55 aa).

This is an uncharacterized protein from Mycoplasma mycoides.